Consider the following 532-residue polypeptide: Probable alpha-galactosidase A (532 aa).

The N-terminal stretch at 1–21 is a signal peptide; sequence MDTTKSLLSTLIAIMIPLSLG. Residues Cys44 and Cys76 are joined by a disulfide bond. N-linked (GlcNAc...) asparagine glycans are attached at residues Asn47, Asn91, and Asn121. Cysteines 124 and 154 form a disulfide. The Nucleophile role is filled by Asp152. Asn201 carries N-linked (GlcNAc...) asparagine glycosylation. The active-site Proton donor is the Asp210. The region spanning 410–531 is the Ricin B-type lectin domain; that stretch reads CSTVIPTGIV…GLPSGVDIKP (122 aa). 2 disulfides stabilise this stretch: Cys427–Cys441 and Cys466–Cys478.

This sequence belongs to the glycosyl hydrolase 27 family.

Its subcellular location is the secreted. It carries out the reaction Hydrolysis of terminal, non-reducing alpha-D-galactose residues in alpha-D-galactosides, including galactose oligosaccharides, galactomannans and galactolipids.. Functionally, hydrolyzes a variety of simple alpha-D-galactoside as well as more complex molecules such as oligosaccharides and polysaccharides. The protein is Probable alpha-galactosidase A (aglA) of Aspergillus fumigatus (strain ATCC MYA-4609 / CBS 101355 / FGSC A1100 / Af293) (Neosartorya fumigata).